We begin with the raw amino-acid sequence, 630 residues long: tRNA uridine 5-carboxymethylaminomethyl modification enzyme MnmG (630 aa).

Residues 13 to 18 (GGGHAG), Val-125, and Ser-180 each bind FAD. 273-287 (GPRYCPSIEDKIHRF) is an NAD(+) binding site. An FAD-binding site is contributed by Gln-370.

Belongs to the MnmG family. As to quaternary structure, homodimer. Heterotetramer of two MnmE and two MnmG subunits. Requires FAD as cofactor.

It is found in the cytoplasm. In terms of biological role, NAD-binding protein involved in the addition of a carboxymethylaminomethyl (cmnm) group at the wobble position (U34) of certain tRNAs, forming tRNA-cmnm(5)s(2)U34. The sequence is that of tRNA uridine 5-carboxymethylaminomethyl modification enzyme MnmG from Shewanella woodyi (strain ATCC 51908 / MS32).